Reading from the N-terminus, the 1101-residue chain is Cytospin-A (1101 aa).

Disordered stretches follow at residues Met-1–Ser-170 and Ser-280–Ala-366. Polar residues-rich tracts occupy residues Glu-29–Ala-48 and Ala-64–Ser-86. Over residues Arg-93–Ala-110 the composition is skewed to low complexity. 2 stretches are compositionally biased toward basic and acidic residues: residues Gly-114–Arg-125 and Gly-151–Ser-165. Residues Lys-162–Phe-254 adopt a coiled-coil conformation. Over residues Leu-333–Thr-355 the composition is skewed to low complexity. 2 coiled-coil regions span residues Cys-373–Leu-427 and Gln-492–Val-785. A disordered region spans residues Ser-923–Ile-978. Over residues Arg-929–Ser-939 the composition is skewed to basic and acidic residues. A compositionally biased stretch (low complexity) spans Thr-953 to Arg-975. Positions Gly-995–Glu-1100 constitute a Calponin-homology (CH) domain.

The protein belongs to the cytospin-A family. As to quaternary structure, may interact with both microtubules and actin cytoskeleton.

The protein resides in the cytoplasm. The protein localises to the cytoskeleton. It is found in the spindle. Its subcellular location is the cell junction. It localises to the gap junction. In terms of biological role, involved in cytokinesis and spindle organization. May play a role in actin cytoskeleton organization and microtubule stabilization and hence required for proper cell adhesion and migration. This Xenopus tropicalis (Western clawed frog) protein is Cytospin-A (specc1l).